A 419-amino-acid polypeptide reads, in one-letter code: GTPase Obg (419 aa).

Residues 1 to 156 (MRFVDYVSIE…FYLDLQLKVM (156 aa)) form the Obg domain. Residues 157 to 334 (ADIGLVGKPN…LGEKQKKLEI (178 aa)) enclose the OBG-type G domain. GTP is bound by residues 163-170 (GKPNAGKS), 188-192 (FTTLA), 209-212 (DLPG), 278-281 (NKCD), and 315-317 (NII). Residues serine 170 and threonine 190 each contribute to the Mg(2+) site. The region spanning 342–419 (IEFNLKAPFL…RIYEFEFHWN (78 aa)) is the OCT domain.

Belongs to the TRAFAC class OBG-HflX-like GTPase superfamily. OBG GTPase family. Monomer. Mg(2+) is required as a cofactor.

It is found in the cytoplasm. Its function is as follows. An essential GTPase which binds GTP, GDP and possibly (p)ppGpp with moderate affinity, with high nucleotide exchange rates and a fairly low GTP hydrolysis rate. Plays a role in control of the cell cycle, stress response, ribosome biogenesis and in those bacteria that undergo differentiation, in morphogenesis control. The protein is GTPase Obg of Mesomycoplasma hyopneumoniae (strain J / ATCC 25934 / NCTC 10110) (Mycoplasma hyopneumoniae).